The primary structure comprises 637 residues: Choline O-acetyltransferase (637 aa).

Residues 1–13 (MPVSKREQSKDTG) show a composition bias toward basic and acidic residues. The tract at residues 1 to 20 (MPVSKREQSKDTGDPCALPK) is disordered. The active-site Proton acceptor is the His329. Residues 407 to 419 (GKEF…MSPD), Ser445, and Gln545 contribute to the CoA site.

The protein belongs to the carnitine/choline acetyltransferase family.

It catalyses the reaction choline + acetyl-CoA = acetylcholine + CoA. Catalyzes the reversible synthesis of acetylcholine (ACh) from acetyl CoA and choline at cholinergic synapses. This is Choline O-acetyltransferase (chat) from Danio rerio (Zebrafish).